The sequence spans 850 residues: Adenylate cyclase (850 aa).

The interval 1–535 is catalytic; that stretch reads MYLYIETLKQ…DISHHFPLRL (535 aa). Residues 541–850 are regulatory; that stretch reads KALYSPCEIR…SLPTKQCQLH (310 aa).

This sequence belongs to the adenylyl cyclase class-1 family.

The protein localises to the cytoplasm. The catalysed reaction is ATP = 3',5'-cyclic AMP + diphosphate. With respect to regulation, the regulatory domain is involved in the regulation of cyclase activity by the carbon source. The sequence is that of Adenylate cyclase (cya) from Yersinia pestis.